A 620-amino-acid polypeptide reads, in one-letter code: GTP-binding protein At3g49725, chloroplastic (620 aa).

Residues methionine 1–arginine 65 constitute a chloroplast transit peptide. The interval serine 57 to proline 100 is disordered. The Hflx-type G domain occupies glycine 346–lysine 585. Residues glycine 352–serine 359, phenylalanine 377–aspartate 381, aspartate 399–glycine 402, and asparagine 468–aspartate 471 contribute to the GTP site. Residues serine 359 and threonine 379 each coordinate Mg(2+). Composition is skewed to acidic residues over residues glutamate 478 to alanine 497 and threonine 511 to aspartate 521. The interval glutamate 478 to aspartate 521 is disordered. Serine 563–leucine 565 is a binding site for GTP. The disordered stretch occupies residues leucine 597–arginine 620.

The protein belongs to the TRAFAC class OBG-HflX-like GTPase superfamily. HflX GTPase family. Mg(2+) serves as cofactor.

The protein resides in the plastid. The protein localises to the chloroplast. This Arabidopsis thaliana (Mouse-ear cress) protein is GTP-binding protein At3g49725, chloroplastic.